The chain runs to 492 residues: Tyrosinase-like protein 1 (492 aa).

An N-terminal signal peptide occupies residues 1-22; that stretch reads MDKMRTLQSLIVKLTLLYGALC. Cu cation-binding residues include histidine 147, histidine 155, histidine 164, histidine 289, histidine 293, and histidine 316. Positions 472–492 are disordered; the sequence is SEPPLQLEGPSFTSSFDDPRI. The segment covering 482–492 has biased composition (polar residues); it reads SFTSSFDDPRI.

Cu(2+) serves as cofactor. In terms of tissue distribution, prismatic layer of shell (at protein level). Expressed primarily in the mantle with highest level in the mantle edge and lower level in the mantle pallium.

It localises to the secreted. This is Tyrosinase-like protein 1 from Margaritifera margaritifera (Freshwater pearl mussel).